A 492-amino-acid chain; its full sequence is Cytochrome P450 monooxygenase MYCFIDRAFT_204672 (492 aa).

An N-linked (GlcNAc...) asparagine glycan is attached at N116. A helical membrane pass occupies residues 269–293 (FLISMIFISAANGCVVSGAMLYSIA). N335 carries N-linked (GlcNAc...) asparagine glycosylation. C430 is a heme binding site.

It belongs to the cytochrome P450 family. The cofactor is heme.

It localises to the membrane. The protein operates within secondary metabolite biosynthesis. Its function is as follows. Cytochrome P450 monooxygenase; part of the gene cluster that mediates the biosynthesis of an emodin derivative that may be involved in black Sigatoka disease of banana. The pathway begins with the synthesis of atrochrysone thioester by the polyketide synthase PKS8-1. The atrochrysone carboxyl ACP thioesterase MYCFIDRAFT_190111 then breaks the thioester bond and releases the atrochrysone carboxylic acid from PKS8-1. The decarboxylase MYCFIDRAFT_34057 then catalyzes the concerted decarboxylation-elimination required to convert atochrysone carboxylic acid into emodin anthrone, which is further oxidized to emodin by the anthrone oxygenase MYCFIDRAFT_34418. The functions of the other tailoring enzymes as well as the final product of the cluster have still to be identified. The sequence is that of Cytochrome P450 monooxygenase MYCFIDRAFT_204672 from Pseudocercospora fijiensis (strain CIRAD86) (Black leaf streak disease fungus).